We begin with the raw amino-acid sequence, 127 residues long: Holo-[acyl-carrier-protein] synthase (127 aa).

2 residues coordinate Mg(2+): D9 and E58.

It belongs to the P-Pant transferase superfamily. AcpS family. The cofactor is Mg(2+).

It is found in the cytoplasm. The catalysed reaction is apo-[ACP] + CoA = holo-[ACP] + adenosine 3',5'-bisphosphate + H(+). Transfers the 4'-phosphopantetheine moiety from coenzyme A to a Ser of acyl-carrier-protein. The chain is Holo-[acyl-carrier-protein] synthase from Shewanella putrefaciens (strain CN-32 / ATCC BAA-453).